Consider the following 391-residue polypeptide: MAAVINTNYLSLVAQNNLNKSQSALGSAIERLSSGLRINSAKDDAAGQAIANRFTANVKGLTQAARNANDGISIAQTTEGALNEINNNLQRIRELTVQASNGTNSASDIDSIQQEVNQRLEEINRIAEQTDFNGIKVLKSNATDMTLSIQVGAKDNETIDIKIDRNSNWNLYDAVGTVPGGTVNGEARTVNALGFDVLSAVTTTIASDTVTFDAAVAAAEQAAGAAVGDGSVVSYGDTANPQYAVVVDNAGTMTSYALTFDKDGKAALGDQLGAVASQAAEAAVGTNDVAAGANVTVSGGAADALSKLDDAMKAVDEQRSSLGAIQNRFESTVANLNNTITNLSAARSRIEDSDYATEVSNMTKNQILQQAGTSVLAQANQVPQNVLSLLR.

It belongs to the bacterial flagellin family.

The protein resides in the secreted. It is found in the bacterial flagellum. Flagellin is the subunit protein which polymerizes to form the filaments of bacterial flagella. The protein is Flagellin (flaA) of Bordetella bronchiseptica (strain ATCC BAA-588 / NCTC 13252 / RB50) (Alcaligenes bronchisepticus).